The following is a 295-amino-acid chain: Epidermal growth factor-like protein 8 (295 aa).

Positions 1–25 are cleaved as a signal peptide; it reads MGSRAELHTLLGGLSFLLLLMSGQG. The 79-residue stretch at 34 to 112 folds into the EMI domain; it reads SQGVCSRQTL…RHPGALTCDE (79 aa). 9 cysteine pairs are disulfide-bonded: Cys-38-Cys-97, Cys-65-Cys-71, Cys-96-Cys-110, Cys-115-Cys-125, Cys-119-Cys-131, Cys-133-Cys-142, Cys-149-Cys-160, Cys-156-Cys-169, and Cys-171-Cys-184. Asn-50 carries an N-linked (GlcNAc...) asparagine glycan. Residues 111 to 143 enclose the EGF-like 1 domain; that stretch reads DEAICAKPCQNGGVCVRPDQCECAPGWGGRHCH. The region spanning 145-185 is the EGF-like 2; calcium-binding domain; sequence DVDECRTGVTLCSHRCHNTAGSFTCGCPHGLVLGPDGRTCA. The stretch at 202-233 forms a coiled coil; the sequence is VREAGREDRALRREIRELRGRLERLEQWAGQA.

The protein localises to the secreted. This chain is Epidermal growth factor-like protein 8 (EGFL8), found in Sus scrofa (Pig).